The chain runs to 347 residues: Transcription factor EC (347 aa).

The necessary for transcriptional transactivation stretch occupies residues 1–119 (MTLDHQIINP…GLTSASCPSS (119 aa)). Positions 139-192 (QKKDNHNLIERRRRYNINYRIKELGTLIPKSNDPDMRWNKGTILKASVEYIKWL) constitute a bHLH domain. Positions 271–347 (PSPEFCDQAI…SFSSDDGDEL (77 aa)) are necessary for transcriptional transactivation. The disordered stretch occupies residues 319 to 347 (DPLLSATSPAVSKESSRRSSFSSDDGDEL). A compositionally biased stretch (low complexity) spans 326–341 (SPAVSKESSRRSSFSS).

It belongs to the MiT/TFE family. In terms of assembly, homodimer. Forms heterodimers with MITF and TFE3. Interacts with MITF.

The protein localises to the nucleus. Transcriptional regulator that acts as a repressor or an activator. Acts as a transcriptional repressor on minimal promoter containing element F (that includes an E-box sequence). Binds to element F in an E-box sequence-specific manner. Acts as a transcriptional transactivator on the proximal promoter region of the tartrate-resistant acid phosphatase (TRAP) E-box containing promoter. Collaborates with MITF in target gene activation. Acts as a transcriptional repressor on minimal promoter containing mu E3 enhancer sequence. Binds to mu E3 DNA sequence of the immunoglobulin heavy-chain gene enhancer. Binds DNA in a homo- or heterodimeric form. The sequence is that of Transcription factor EC (TFEC) from Pan troglodytes (Chimpanzee).